The following is a 606-amino-acid chain: Mitogen-activated protein kinase kinase kinase 7 (606 aa).

Positions 1-300 (MSTASAASSS…FPGADEPLQY (300 aa)) are interaction with MAPK8IP1. The region spanning 36–291 (IEVEEVVGRG…KIMTHLMRYF (256 aa)) is the Protein kinase domain. Residues 42-50 (VGRGAFGVV) and K63 contribute to the ATP site. K72 participates in a covalent cross-link: Glycyl lysine isopeptide (Lys-Gly) (interchain with G-Cter in ubiquitin). D156 functions as the Proton acceptor in the catalytic mechanism. Residue K158 forms a Glycyl lysine isopeptide (Lys-Gly) (interchain with G-Cter in ubiquitin) linkage. A phosphothreonine; by autocatalysis mark is found at T184 and T187. Position 192 is a phosphoserine; by autocatalysis (S192). Residue K209 forms a Glycyl lysine isopeptide (Lys-Gly) (interchain with G-Cter in ubiquitin) linkage. Disordered stretches follow at residues 301–338 (PCQY…MEQV) and 354–391 (KNQA…MSAD). The span at 306-338 (DEGQSNSATSTGSFMDIASTNTSNKSDTNMEQV) shows a compositional bias: polar residues. Low complexity predominate over residues 361-375 (SDSGRLSLGASRGSS). Phosphoserine occurs at positions 367, 389, and 439. Positions 443–452 (LTVTGTEPGQ) are enriched in polar residues. The disordered stretch occupies residues 443 to 492 (LTVTGTEPGQVSSRSSSPSVRMITTSGPTSEKPARSLPWTPDDSTDTNGS). The segment covering 453-463 (VSSRSSSPSVR) has biased composition (low complexity). S455 carries the post-translational modification Phosphoserine.

Belongs to the protein kinase superfamily. STE Ser/Thr protein kinase family. MAP kinase kinase kinase subfamily. As to quaternary structure, can form homodimer. Binds both upstream activators and downstream substrates in multimolecular complexes. Interacts with TAB1/MAP3K7IP1, TAB2/MAP3K7IP2 and TAB3/MAP3K7IP3. Identified in the TRIKA2 complex composed of MAP3K7/TAK1, TAB1/MAP3K7IP1 and TAB2/MAP3K7IP2. Interacts with PPM1L and PPM1B/PP2CB. Interaction with PP2A and PPP6C leads to its repressed activity. Interacts with TRAF6 and TAB1/MAP3K7IP1; during IL-1 signaling. Interacts with TAOK1 and TAOK2; interaction with TAOK2 interferes with MAP3K7 interaction with IKKA, thus preventing NF-kappa-B activation. Interacts with DYNC2I2 (via WD domains). Interacts with CYLD and RBCK1. Interacts with TGFBR1; induces MAP3K7/TAK1 activation by TRAF6. Interacts with MAPK8IP1 and SMAD6. Interacts with isoform 1 of VRK2. Interacts with DAB2; the interaction is induced by TGF-beta stimulation and may mediate TGF-beta stimulated JNK activation. Interacts with TRIM5. Part of a complex containing ITCH, NDFIP1 and MAP3K7. Interacts with PLEKHM1 (via N- and C-terminus). Found in a complex with SH3RF1, RAC2, MAP2K7/MKK7, MAPK8IP1/JIP1, MAPK8/JNK1 and MAPK9/JNK2. Interacts with SASH1. Interacts with RIPK1. The cofactor is Mg(2+). Association with TAB1/MAP3K7IP1 promotes autophosphorylation at Ser-192 and subsequent activation. Association with TAB2/MAP3K7IP2, itself associated with free unanchored Lys-63 polyubiquitin chain, promotes autophosphorylation and subsequent activation of MAP3K7. Dephosphorylation at Ser-192 by PPM1B/PP2CB and at Thr-187 by PP2A and PPP6C leads to inactivation. Deubiquitinated by USP19; leading to negative regulation of TNF-alpha- and IL-1beta-triggered NF-kappa-B activation. Post-translationally, 'Lys-48'-linked polyubiquitination at Lys-72 is induced by TNFalpha, and leads to proteasomal degradation. Undergoes 'Lys-48'-linked polyubiquitination catalyzed by ITCH. 'Lys-63'-linked polyubiquitination at Lys-158 by TRIM8 does not lead to proteasomal degradation but contributes to autophosphorylation and activation. Deubiquitinated by CYLD, a protease that selectively cleaves 'Lys-63'-linked ubiquitin chains.

The protein resides in the cytoplasm. It localises to the cell membrane. The enzyme catalyses L-seryl-[protein] + ATP = O-phospho-L-seryl-[protein] + ADP + H(+). The catalysed reaction is L-threonyl-[protein] + ATP = O-phospho-L-threonyl-[protein] + ADP + H(+). With respect to regulation, activated by pro-inflammatory cytokines and in response to physical and chemical stresses, including osmotic stress, oxidative stress, arsenic and ultraviolet light irradiation. Activated by 'Lys-63'-linked polyubiquitination and by autophosphorylation. Association with TAB1/MAP3K7IP1 and TAB2/MAP3K7IP2 promotes activation through autophosphorylation, whereas PPM1B/PP2CB, PP2A and PPP6C dephosphorylation leads to inactivation. Ceramides are also able to activate MAP3K7/TAK1. Serine/threonine kinase which acts as an essential component of the MAP kinase signal transduction pathway. Plays an important role in the cascades of cellular responses evoked by changes in the environment. Mediates signal transduction of TRAF6, various cytokines including interleukin-1 (IL-1), transforming growth factor-beta (TGFB), TGFB-related factors like BMP2 and BMP4, toll-like receptors (TLR), tumor necrosis factor receptor CD40 and B-cell receptor (BCR). Once activated, acts as an upstream activator of the MKK/JNK signal transduction cascade and the p38 MAPK signal transduction cascade through the phosphorylation and activation of several MAP kinase kinases like MAP2K1/MEK1, MAP2K3/MKK3, MAP2K6/MKK6 and MAP2K7/MKK7. These MAP2Ks in turn activate p38 MAPKs and c-jun N-terminal kinases (JNKs); both p38 MAPK and JNK pathways control the transcription factors activator protein-1 (AP-1). Independently of MAP2Ks and p38 MAPKs, acts as a key activator of NF-kappa-B by promoting activation of the I-kappa-B-kinase (IKK) core complex. Mechanistically, recruited to polyubiquitin chains of RIPK2 and IKBKG/NEMO via TAB2/MAP3K7IP2 and TAB3/MAP3K7IP3, and catalyzes phosphorylation and activation of IKBKB/IKKB component of the IKK complex, leading to NF-kappa-B activation. In osmotic stress signaling, plays a major role in the activation of MAPK8/JNK1, but not that of NF-kappa-B. Promotes TRIM5 capsid-specific restriction activity. Phosphorylates RIPK1 at 'Ser-321' which positively regulates RIPK1 interaction with RIPK3 to promote necroptosis but negatively regulates RIPK1 kinase activity and its interaction with FADD to mediate apoptosis. Phosphorylates STING1 in response to cGAMP-activation, promoting association between STEEP1 and STING1 and STING1 translocation to COPII vesicles. This is Mitogen-activated protein kinase kinase kinase 7 (Map3k7) from Rattus norvegicus (Rat).